The sequence spans 346 residues: Acrosin (346 aa).

The signal sequence occupies residues 1–19 (MALLLPLAVLLAACRPGHG). 6 disulfide bridges follow: Cys-24/Cys-146, Cys-27/Cys-154, Cys-70/Cys-86, Cys-168/Cys-240, Cys-203/Cys-219, and Cys-230/Cys-260. One can recognise a Peptidase S1 domain in the interval 41–284 (VVGGTEALHG…FYNWILLQVR (244 aa)). His-85 (charge relay system) is an active-site residue. N-linked (GlcNAc...) asparagine glycosylation is present at Asn-128. Asp-134 functions as the Charge relay system in the catalytic mechanism. N-linked (GlcNAc...) asparagine glycosylation is present at Asn-204. Ser-234 (charge relay system) is an active-site residue. Residues 266–346 (PGIYTSTQHF…LLQSLWGSKA (81 aa)) constitute a propeptide that is removed on maturation.

Belongs to the peptidase S1 family. Heavy chain (catalytic) and a light chain linked by two disulfide bonds. Post-translationally, glycosylated.

The catalysed reaction is Preferential cleavage: Arg-|-Xaa, Lys-|-Xaa.. With respect to regulation, inhibited by aprotinin, ovomucoid, soybean trypsin inhibitor, benzamidine, p-aminobenzamidine, and zinc ions. Activity also inhibited by a Kazal-type proteinase inhibitor. Its function is as follows. Serine protease of trypsin-like cleavage specificity. Synthesized in a zymogen form, proacrosin and stored in the acrosome. In Meleagris gallopavo (Wild turkey), this protein is Acrosin.